A 44-amino-acid chain; its full sequence is Photosystem I reaction center subunit IX (44 aa).

A helical membrane pass occupies residues Y7–I27.

Belongs to the PsaJ family.

It localises to the plastid. The protein resides in the chloroplast thylakoid membrane. May help in the organization of the PsaE and PsaF subunits. In Welwitschia mirabilis (Tree tumbo), this protein is Photosystem I reaction center subunit IX.